Reading from the N-terminus, the 160-residue chain is Thialysine N-epsilon-acetyltransferase (160 aa).

The 156-residue stretch at 4-159 (FEIVTVTPDH…DGAAINKFAD (156 aa)) folds into the N-acetyltransferase domain. Residues 84–86 (LYI), 92–97 (RMGLAR), 123–126 (NKNA), and 130–133 (YDTV) each bind acetyl-CoA.

It belongs to the acetyltransferase family. As to quaternary structure, homodimer.

It catalyses the reaction S-(2-aminoethyl)-L-cysteine + acetyl-CoA = S-(2-acetamidoethyl)-L-cysteine + CoA + H(+). The catalysed reaction is O-(2-aminoethyl)-L-serine + acetyl-CoA = O-(2-acetamidoethyl)-L-serine + CoA + H(+). The enzyme catalyses S-(2-aminoethyl)-homocysteine + acetyl-CoA = S-(2-acetamidoethyl)-homocysteine + CoA + H(+). Its function is as follows. Catalyzes the N-acetylation of the amino acid thialysine (S-(2-aminoethyl)-L-cysteine), a L-lysine analog with the 4-methylene group substituted with a sulfur. Substrate specificity: thialysine &gt; O-(2-aminoethyl)-L-serine &gt; S-(2-aminoethyl)-D,L-homocysteine. Does not act on polyamines, such as spermidine and spermine, nor on diamines putrescine and cadaverine. The chain is Thialysine N-epsilon-acetyltransferase from Caenorhabditis elegans.